We begin with the raw amino-acid sequence, 975 residues long: Nesprin-3 (975 aa).

Residues 1-925 (MTQQPQDDFD…LGSLFRRACC (925 aa)) are Cytoplasmic-facing. A Spectrin 1 repeat occupies 220–325 (REHEEYQAGV…WEEEEERLRG (106 aa)). The stretch at 617–645 (NHQHKMDQLSSDFQALQRSLEDLVDRCRQ) forms a coiled coil. The stretch at 647-740 (VQEHCTFSHQ…RELAESWRAL (94 aa)) is one Spectrin 2 repeat. The KASH domain occupies 917-975 (GSLFRRACCVALPLQLLLLLFLLLLFLLPIREEDRSCTLANNFARSFTLMLRYNGPPPT). Residues 926 to 946 (VALPLQLLLLLFLLLLFLLPI) form a helical; Anchor for type IV membrane protein membrane-spanning segment. The Perinuclear space segment spans residues 947-975 (REEDRSCTLANNFARSFTLMLRYNGPPPT).

It belongs to the nesprin family. Core component of LINC complexes which are composed of inner nuclear membrane SUN domain-containing proteins coupled to outer nuclear membrane KASH domain-containing nesprins. SUN and KASH domain-containing proteins seem to bind each other promiscuously; however, differentially expression of LINC complex constituents can give rise to specific assemblies. Interacts with SUN1 and SUN2; probably forming respective LINC complexes. Interacts with PLEC (via actin-binding domain). Interacts with DST. Interacts with SYNE1 via spectrin repeats. Interacts (via KASH domain) with TOR1A (ATP-bound); the interaction is required for SYNE3 nuclear envelope localization. The disulfid bond with SUN1 or SUN2 is required for stability of the respective LINC complex under tensile forces. Expressed in aortic endothelial cells (at protein level).

It is found in the nucleus outer membrane. Its subcellular location is the nucleus envelope. The protein localises to the rough endoplasmic reticulum. Functionally, as a component of the LINC (LInker of Nucleoskeleton and Cytoskeleton) complex involved in the connection between the nuclear lamina and the cytoskeleton. The nucleocytoplasmic interactions established by the LINC complex play an important role in the transmission of mechanical forces across the nuclear envelope and in nuclear movement and positioning. Probable anchoring protein which tethers the nucleus to the cytoskeleton by binding PLEC which can associate with the intermediate filament system. Plays a role in the regulation of aortic epithelial cell morphology, and is required for flow-induced centrosome polarization and directional migration in aortic endothelial cells. The sequence is that of Nesprin-3 from Homo sapiens (Human).